The primary structure comprises 477 residues: Protoporphyrinogen oxidase (477 aa).

Residues 9–14, 34–35, Trp42, 57–60, Val257, Ala449, and 454–456 contribute to the FAD site; these read GGGISG, ES, GPRG, and VAV.

This sequence belongs to the protoporphyrinogen/coproporphyrinogen oxidase family. Protoporphyrinogen oxidase subfamily. As to quaternary structure, monomer. Homodimer. Requires FAD as cofactor. As to expression, expressed in heart, brain, placenta, lung, liver, skeletal muscle, kidney and pancreas.

It localises to the mitochondrion inner membrane. The catalysed reaction is protoporphyrinogen IX + 3 O2 = protoporphyrin IX + 3 H2O2. It functions in the pathway porphyrin-containing compound metabolism; protoporphyrin-IX biosynthesis; protoporphyrin-IX from protoporphyrinogen-IX: step 1/1. Its function is as follows. Catalyzes the 6-electron oxidation of protoporphyrinogen-IX to form protoporphyrin-IX. The sequence is that of Protoporphyrinogen oxidase (PPOX) from Homo sapiens (Human).